Consider the following 377-residue polypeptide: Spermidine/putrescine import ATP-binding protein PotA (377 aa).

Residues 18–248 enclose the ABC transporter domain; it reads IRLSGISKSF…PKNLFVARFI (231 aa). 50–57 provides a ligand contact to ATP; it reads GPSGCGKT.

This sequence belongs to the ABC transporter superfamily. Spermidine/putrescine importer (TC 3.A.1.11.1) family. The complex is composed of two ATP-binding proteins (PotA), two transmembrane proteins (PotB and PotC) and a solute-binding protein (PotD).

The protein resides in the cell inner membrane. The catalysed reaction is ATP + H2O + polyamine-[polyamine-binding protein]Side 1 = ADP + phosphate + polyamineSide 2 + [polyamine-binding protein]Side 1.. In terms of biological role, part of the ABC transporter complex PotABCD involved in spermidine/putrescine import. Responsible for energy coupling to the transport system. The protein is Spermidine/putrescine import ATP-binding protein PotA of Vibrio cholerae serotype O1 (strain ATCC 39315 / El Tor Inaba N16961).